The chain runs to 234 residues: Glucosamine-6-phosphate deaminase (234 aa).

Asp-62 acts as the Proton acceptor; for enolization step in catalysis. Asn-128 acts as the For ring-opening step in catalysis. His-130 acts as the Proton acceptor; for ring-opening step in catalysis. Glu-135 functions as the For ring-opening step in the catalytic mechanism.

The protein belongs to the glucosamine/galactosamine-6-phosphate isomerase family. NagB subfamily.

The catalysed reaction is alpha-D-glucosamine 6-phosphate + H2O = beta-D-fructose 6-phosphate + NH4(+). It functions in the pathway amino-sugar metabolism; N-acetylneuraminate degradation; D-fructose 6-phosphate from N-acetylneuraminate: step 5/5. Catalyzes the reversible isomerization-deamination of glucosamine 6-phosphate (GlcN6P) to form fructose 6-phosphate (Fru6P) and ammonium ion. The chain is Glucosamine-6-phosphate deaminase from Streptococcus pyogenes serotype M1.